The primary structure comprises 250 residues: MGAQPSRRRMTEAQHMALAELPPELLLQVLSHVPPRALVTRCRPVCRAWRDLVDGPSVWLLQLARDRSAEGRALYALAQSCPADRNGHDDFPLCALARFCLLAPLGRNLIYNSCGEQGFRGWEVEHGGNGWAVEKNLTMVPGAPSQTCFVTSFEWCFKRQLVDLVKEGVWQELLDSAQIEIYIADWWGARENCGCIYRLRVRLLDEHENEVVKFSASPNPVLQWTERSCRQVSPDCSLNPGLLQGLSRLH.

Residues 15–62 form the F-box domain; the sequence is HMALAELPPELLLQVLSHVPPRALVTRCRPVCRAWRDLVDGPSVWLLQ. One can recognise an FBA domain in the interval 99 to 250; sequence FCLLAPLGRN…GLLQGLSRLH (152 aa).

As to quaternary structure, part of a SCF (SKP1-cullin-F-box) protein ligase complex. Interacts with SKP1 and CUL1.

Its function is as follows. Substrate-recognition component of the SCF (SKP1-CUL1-F-box protein)-type E3 ubiquitin ligase complex. Able to recognize and bind denatured glycoproteins, which are modified with complex-type oligosaccharides. Also recognizes sulfated glycans. Does not bind high-mannose glycoproteins. This is F-box only protein 17 (Fbxo17) from Rattus norvegicus (Rat).